The primary structure comprises 257 residues: tRNA pseudouridine synthase A (257 aa).

The active-site Nucleophile is the Asp-53. Tyr-111 serves as a coordination point for substrate.

This sequence belongs to the tRNA pseudouridine synthase TruA family. Homodimer.

It carries out the reaction uridine(38/39/40) in tRNA = pseudouridine(38/39/40) in tRNA. Functionally, formation of pseudouridine at positions 38, 39 and 40 in the anticodon stem and loop of transfer RNAs. This is tRNA pseudouridine synthase A from Xanthomonas oryzae pv. oryzae (strain MAFF 311018).